Here is a 160-residue protein sequence, read N- to C-terminus: Large ribosomal subunit protein eL21A (160 aa).

Lys-32 participates in a covalent cross-link: Glycyl lysine isopeptide (Lys-Gly) (interchain with G-Cter in ubiquitin).

It belongs to the eukaryotic ribosomal protein eL21 family. In terms of assembly, component of the large ribosomal subunit (LSU). Mature yeast ribosomes consist of a small (40S) and a large (60S) subunit. The 40S small subunit contains 1 molecule of ribosomal RNA (18S rRNA) and 33 different proteins (encoded by 57 genes). The large 60S subunit contains 3 rRNA molecules (25S, 5.8S and 5S rRNA) and 46 different proteins (encoded by 81 genes).

It is found in the cytoplasm. Its function is as follows. Component of the ribosome, a large ribonucleoprotein complex responsible for the synthesis of proteins in the cell. The small ribosomal subunit (SSU) binds messenger RNAs (mRNAs) and translates the encoded message by selecting cognate aminoacyl-transfer RNA (tRNA) molecules. The large subunit (LSU) contains the ribosomal catalytic site termed the peptidyl transferase center (PTC), which catalyzes the formation of peptide bonds, thereby polymerizing the amino acids delivered by tRNAs into a polypeptide chain. The nascent polypeptides leave the ribosome through a tunnel in the LSU and interact with protein factors that function in enzymatic processing, targeting, and the membrane insertion of nascent chains at the exit of the ribosomal tunnel. This is Large ribosomal subunit protein eL21A from Saccharomyces cerevisiae (strain ATCC 204508 / S288c) (Baker's yeast).